The sequence spans 341 residues: Farnesyl pyrophosphate synthase 2 (341 aa).

The isopentenyl diphosphate site is built by K46, R49, and Q85. D92 and D96 together coordinate Mg(2+). Residue R101 participates in dimethylallyl diphosphate binding. Residue R102 participates in isopentenyl diphosphate binding. 5 residues coordinate dimethylallyl diphosphate: K189, T190, Q228, K245, and K254.

This sequence belongs to the FPP/GGPP synthase family. The cofactor is Mg(2+). As to expression, mainly expressed in trichomes, roots and flowers, and, to a lower extent, in leaves and stems.

Its subcellular location is the cytoplasm. It localises to the nucleus. The catalysed reaction is isopentenyl diphosphate + dimethylallyl diphosphate = (2E)-geranyl diphosphate + diphosphate. It carries out the reaction isopentenyl diphosphate + (2E)-geranyl diphosphate = (2E,6E)-farnesyl diphosphate + diphosphate. Its pathway is isoprenoid biosynthesis; farnesyl diphosphate biosynthesis; farnesyl diphosphate from geranyl diphosphate and isopentenyl diphosphate: step 1/1. The protein operates within sesquiterpene biosynthesis. It participates in isoprenoid biosynthesis; geranyl diphosphate biosynthesis; geranyl diphosphate from dimethylallyl diphosphate and isopentenyl diphosphate: step 1/1. Its function is as follows. Catalyzes the sequential condensation of isopentenyl pyrophosphate with the allylic pyrophosphates, dimethylallyl pyrophosphate, and then with the resultant geranylpyrophosphate to the ultimate product farnesyl pyrophosphate. In Cannabis sativa (Hemp), this protein is Farnesyl pyrophosphate synthase 2.